The sequence spans 309 residues: Protoheme IX farnesyltransferase (309 aa).

9 helical membrane passes run 35-55, 64-84, 114-134, 135-155, 161-181, 187-207, 231-251, 253-273, and 289-309; these read IGIVNSNLITTFAGMWLAFYF, LHLVFFTLFGAALVIAGSCAI, VLWLGIGLVAIGEMGLLMTTV, TAAVVGLIGMATYVFLYTLWT, INTVVGSISGAVPPVIGWTAV, IVPLILFLIMFLWQPPHFLAL, MTKRQIIVWVACLLPLPFYLF, LGVPFLIVATLLNVGWLLLGL, and FVYSLNYLTILFVAMIIATLW.

This sequence belongs to the UbiA prenyltransferase family. Protoheme IX farnesyltransferase subfamily. Interacts with CtaA.

It is found in the cell membrane. The catalysed reaction is heme b + (2E,6E)-farnesyl diphosphate + H2O = Fe(II)-heme o + diphosphate. Its pathway is porphyrin-containing compound metabolism; heme O biosynthesis; heme O from protoheme: step 1/1. Converts heme B (protoheme IX) to heme O by substitution of the vinyl group on carbon 2 of heme B porphyrin ring with a hydroxyethyl farnesyl side group. This is Protoheme IX farnesyltransferase from Geobacillus kaustophilus (strain HTA426).